Reading from the N-terminus, the 316-residue chain is Beta-ketoacyl-[acyl-carrier-protein] synthase III (316 aa).

Catalysis depends on residues cysteine 112 and histidine 243. The segment at 244–248 (QANLR) is ACP-binding. The active site involves asparagine 273.

It belongs to the thiolase-like superfamily. FabH family. In terms of assembly, homodimer.

It localises to the cytoplasm. The enzyme catalyses malonyl-[ACP] + acetyl-CoA + H(+) = 3-oxobutanoyl-[ACP] + CO2 + CoA. Its pathway is lipid metabolism; fatty acid biosynthesis. In terms of biological role, catalyzes the condensation reaction of fatty acid synthesis by the addition to an acyl acceptor of two carbons from malonyl-ACP. Catalyzes the first condensation reaction which initiates fatty acid synthesis and may therefore play a role in governing the total rate of fatty acid production. Possesses both acetoacetyl-ACP synthase and acetyl transacylase activities. Its substrate specificity determines the biosynthesis of branched-chain and/or straight-chain of fatty acids. The chain is Beta-ketoacyl-[acyl-carrier-protein] synthase III from Actinobacillus succinogenes (strain ATCC 55618 / DSM 22257 / CCUG 43843 / 130Z).